We begin with the raw amino-acid sequence, 794 residues long: Protein sel-1 homolog 1 (794 aa).

The signal sequence occupies residues 1 to 21 (MQVRVRLLLLLCAVLLGSAAA). The segment at 22-737 (SSDEETNQDE…DLFTQLDMDQ (716 aa)) is interaction with ERLEC1, OS9 and SYVN1. Residues 22–738 (SSDEETNQDE…LFTQLDMDQL (717 aa)) are Lumenal-facing. The span at 23-32 (SDEETNQDES) shows a compositional bias: acidic residues. 2 disordered regions span residues 23–46 (SDEETNQDESLDSKGALPTDGSVK) and 73–105 (QDEEESSKSQEEVSVTEDISFLDSPNPSSKTYE). The region spanning 122-170 (AHGEPCHFPFLFLDKEYDECTSDGREDGRLWCATTYDYKTDEKWGFCET) is the Fibronectin type-II domain. 2 disulfides stabilise this stretch: C127/C153 and C141/C168. Sel1-like repeat units follow at residues 183-218 (AEAIYQSGMKILNGSTRKNQKREAYRYLQKAAGMNH), 219-254 (TKALERVSYALLFGDYLTQNIQAAKEMFEKLTEEGS), 255-290 (PKGQTGLGFLYASGLGVNSSQAKALVYYTFGALGGN), 291-326 (LIAHMVLGYRYWAGIGVLQSCESALTHYRLVANHVA), 373-409 (VQAQVGLGQLHLHGGRGVEQNHQRAFDYFNLAANAGN), 410-446 (SHAMAFLGKMYSEGSDIVPQSNETALHYFKKAADMGN), 447-482 (PVGQSGLGMAYLYGRGVQVNYDLALKYFQKAAEQGW), 483-518 (VDGQLQLGSMYYNGIGVKRDYKQALKYFNLASQGGH), and 519-554 (ILAFYNLAQMHASGTGVMRSCHTAVELFKNVCERGR). N195 and N217 each carry an N-linked (GlcNAc...) asparagine glycan. N-linked (GlcNAc...) asparagine glycosylation occurs at N272. The important for homodimerization and oligomerization stretch occupies residues 352–537 (NSGMLEEDLI…MHASGTGVMR (186 aa)). N-linked (GlcNAc...) asparagine glycosylation occurs at N431. An N-linked (GlcNAc...) asparagine glycan is attached at N608. 2 Sel1-like repeats span residues 627-662 (TVARIKLGDYHFYGFGTDVDYETAFIHYRLASEQQH) and 664-699 (AQAMFNLGYMHEKGLGIKQDIHLAKRFYDMAAEASP). The tract at residues 643–723 (TDVDYETAFI…VVYFLQYIRE (81 aa)) is interaction with SYVN1. The interval 738-794 (LLGPEWDLYLMTIIALLLGTVIAYRQRQHQDIPVPRPPGPRPAPPQQEGPPEQQPPQ) is mediates retention in the endoplasmic reticulum. A helical membrane pass occupies residues 739–759 (LGPEWDLYLMTIIALLLGTVI). Topologically, residues 760 to 794 (AYRQRQHQDIPVPRPPGPRPAPPQQEGPPEQQPPQ) are cytoplasmic. Residues 767 to 794 (QDIPVPRPPGPRPAPPQQEGPPEQQPPQ) are disordered. Over residues 771-794 (VPRPPGPRPAPPQQEGPPEQQPPQ) the composition is skewed to pro residues.

This sequence belongs to the sel-1 family. In terms of assembly, homodimer and homooligomer. May form a complex with ERLEC1, HSPA5, OS9, and SYVN1. Interacts with FOXRED2 and EDEM1. Interacts with LPL and LMF1; may stabilize the complex formed by LPL and LMF1 and thereby promote the export of LPL dimers. Component of the HRD1 complex, which comprises at least SYNV1/HRD1, DERL1/2, FAM8A1, HERPUD1/HERP, OS9, SEL1L and UBE2J1. SYNV1 assembles with SEL1L and FAM8A1 through its transmembrane domains, but interaction with its cytoplasmic domain is required to confer stability to FAM8A1 and enhance recruitment of HERPUD1. The interaction with SYNV1/HRD1 is direct. Post-translationally, N-glycosylated.

The protein resides in the endoplasmic reticulum membrane. Plays a role in the endoplasmic reticulum quality control (ERQC) system also called ER-associated degradation (ERAD) involved in ubiquitin-dependent degradation of misfolded endoplasmic reticulum proteins. Enhances SYVN1 stability. Plays a role in LPL maturation and secretion. Required for normal differentiation of the pancreas epithelium, and for normal exocrine function and survival of pancreatic cells. May play a role in Notch signaling. The sequence is that of Protein sel-1 homolog 1 (Sel1l) from Rattus norvegicus (Rat).